A 204-amino-acid polypeptide reads, in one-letter code: N-(5'-phosphoribosyl)anthranilate isomerase (204 aa).

This sequence belongs to the TrpF family.

It catalyses the reaction N-(5-phospho-beta-D-ribosyl)anthranilate = 1-(2-carboxyphenylamino)-1-deoxy-D-ribulose 5-phosphate. The protein operates within amino-acid biosynthesis; L-tryptophan biosynthesis; L-tryptophan from chorismate: step 3/5. This Bacillus anthracis (strain A0248) protein is N-(5'-phosphoribosyl)anthranilate isomerase.